A 307-amino-acid polypeptide reads, in one-letter code: Protoheme IX farnesyltransferase (307 aa).

8 helical membrane-spanning segments follow: residues 32-52 (VVELLLVTTVPTMILAARGIP), 54-74 (LWLVLATVVGGYMSAGSAGAF), 105-125 (LVFAWALGVASVLVLGFFTNW), 126-146 (LAAGLSVAAILIYVVFYTLIL), 169-189 (WAVVTNSVGWAPVILFGVIFL), 222-242 (VVGLQVVLYAWAMVACSLLLI), 244-264 (VARMGVLYTAVALVAGGWFLY), and 287-307 (GSIAYLTLIFLAVAIDPLLPF).

It belongs to the UbiA prenyltransferase family. Protoheme IX farnesyltransferase subfamily.

It is found in the cell membrane. The enzyme catalyses heme b + (2E,6E)-farnesyl diphosphate + H2O = Fe(II)-heme o + diphosphate. The protein operates within porphyrin-containing compound metabolism; heme O biosynthesis; heme O from protoheme: step 1/1. Functionally, converts heme B (protoheme IX) to heme O by substitution of the vinyl group on carbon 2 of heme B porphyrin ring with a hydroxyethyl farnesyl side group. This chain is Protoheme IX farnesyltransferase, found in Leifsonia xyli subsp. xyli (strain CTCB07).